The primary structure comprises 307 residues: D-alanine--D-alanine ligase (307 aa).

Positions 105 to 304 (KMLWKGFGLP…FEKLVEKILE (200 aa)) constitute an ATP-grasp domain. 135–190 (VARLGLPLMVKPSREGSSVGLTKVDSADKLKSAVDLALKFDDIVLIEEWLSGDELT) contributes to the ATP binding site. 3 residues coordinate Mg(2+): Asp258, Glu271, and Asn273.

It belongs to the D-alanine--D-alanine ligase family. Mg(2+) serves as cofactor. The cofactor is Mn(2+).

The protein resides in the cytoplasm. The catalysed reaction is 2 D-alanine + ATP = D-alanyl-D-alanine + ADP + phosphate + H(+). It participates in cell wall biogenesis; peptidoglycan biosynthesis. In terms of biological role, cell wall formation. The chain is D-alanine--D-alanine ligase from Actinobacillus succinogenes (strain ATCC 55618 / DSM 22257 / CCUG 43843 / 130Z).